The sequence spans 251 residues: Imidazole glycerol phosphate synthase subunit HisF (251 aa).

Catalysis depends on residues D11 and D130.

It belongs to the HisA/HisF family. Heterodimer of HisH and HisF.

It localises to the cytoplasm. It carries out the reaction 5-[(5-phospho-1-deoxy-D-ribulos-1-ylimino)methylamino]-1-(5-phospho-beta-D-ribosyl)imidazole-4-carboxamide + L-glutamine = D-erythro-1-(imidazol-4-yl)glycerol 3-phosphate + 5-amino-1-(5-phospho-beta-D-ribosyl)imidazole-4-carboxamide + L-glutamate + H(+). The protein operates within amino-acid biosynthesis; L-histidine biosynthesis; L-histidine from 5-phospho-alpha-D-ribose 1-diphosphate: step 5/9. Its function is as follows. IGPS catalyzes the conversion of PRFAR and glutamine to IGP, AICAR and glutamate. The HisF subunit catalyzes the cyclization activity that produces IGP and AICAR from PRFAR using the ammonia provided by the HisH subunit. The polypeptide is Imidazole glycerol phosphate synthase subunit HisF (Metallosphaera sedula (strain ATCC 51363 / DSM 5348 / JCM 9185 / NBRC 15509 / TH2)).